A 424-amino-acid polypeptide reads, in one-letter code: Chloroquine resistance transporter (424 aa).

At 1 to 49 (MKFASKKNNQKNSSKNDERYRELDNLVQEGNGSRLGGGSCLGKCAHVFK) the chain is on the cytoplasmic side. Residues 50 to 58 (LIFKEIKDN) lie within the membrane without spanning it. The helical transmembrane segment at 59–83 (IFIYILSIIYLSVSVMNTIFAKRTL) threads the bilayer. At 84–89 (NKIGNY) the chain is on the vacuolar side. The helical transmembrane segment at 90–111 (SFVTSETHNFICMIMFFIVYSL) threads the bilayer. Residues 112-126 (FGNKKGNSKERHRSF) are Cytoplasmic-facing. A helical membrane pass occupies residues 127–147 (NLQFFAISMLDACSVILAFIG). The Vacuolar portion of the chain corresponds to 148–152 (LTRTT). A helical transmembrane segment spans residues 153 to 173 (GNIQSFVLQLSIPINMFFCFL). Topologically, residues 174–180 (ILRYRYH) are cytoplasmic. The helical transmembrane segment at 181 to 202 (LYNYLGAVIIVVTIALVEMKLS) threads the bilayer. At 203–210 (FETQEENS) the chain is on the vacuolar side. A helical membrane pass occupies residues 211–236 (IIFNLVLISSLIPVCFSNMTREIVFK). The Cytoplasmic portion of the chain corresponds to 237–241 (KYKID). A helical transmembrane segment spans residues 242 to 263 (ILRLNAMVSFFQLFTSCLILPV). Topologically, residues 264 to 279 (YTLPFLKQLHLPYNEI) are vacuolar. Residues 280–292 (WTNIKNGFACLFL) lie within the membrane without spanning it. 2 disulfides stabilise this stretch: cysteine 289–cysteine 312 and cysteine 301–cysteine 309. The Vacuolar segment spans residues 293 to 314 (GRNTVVENCGLGMAKLCDDCDG). Residues 315 to 339 (AWKTFALFSFFDICDNLITSYIIDK) traverse the membrane as a helical segment. Topologically, residues 340-343 (FSTM) are cytoplasmic. A helical transmembrane segment spans residues 344–361 (TYTIVSCIQGPALAIAYY). Residues 362-374 (FKFLAGDVVREPR) lie on the Vacuolar side of the membrane. Residues 375-397 (LLDFVTLFGYLFGSIIYRVGNII) form a helical membrane-spanning segment. Topologically, residues 398–424 (LERKKMRNEENEDSEGELTNVDSIITQ) are cytoplasmic.

Belongs to the CRT-like transporter family. As to quaternary structure, monomer.

It localises to the membrane. The protein localises to the vacuole membrane. It carries out the reaction L-arginine(in) = L-arginine(out). It catalyses the reaction L-lysine(in) = L-lysine(out). The catalysed reaction is L-histidine(out) = L-histidine(in). The enzyme catalyses Fe(3+)(in) = Fe(3+)(out). It carries out the reaction Fe(2+)(in) = Fe(2+)(out). Its function is as follows. Nutrient transporter. Substrate transport is pH-dependent. Can transport arginine, lysine, histidine and peptides. Involved in maintaining the osmotic homeostasis of the digestive vacuole. Required for the normal asexual intraerythrocytic proliferation of parasites. Can transport Fe(2+) and Fe(3+). The sequence is that of Chloroquine resistance transporter from Plasmodium falciparum (isolate 7G8).